Reading from the N-terminus, the 190-residue chain is Thymidylate kinase (190 aa).

7 to 14 is an ATP binding site; the sequence is GVDTCGKS.

It belongs to the thymidylate kinase family.

It catalyses the reaction dTMP + ATP = dTDP + ADP. In terms of biological role, phosphorylation of dTMP to form dTDP in both de novo and salvage pathways of dTTP synthesis. This chain is Thymidylate kinase, found in Wolinella succinogenes (strain ATCC 29543 / DSM 1740 / CCUG 13145 / JCM 31913 / LMG 7466 / NCTC 11488 / FDC 602W) (Vibrio succinogenes).